The chain runs to 715 residues: Scinderin (715 aa).

The actin-severing stretch occupies residues 1–363 (MAQGLYHEEF…DGFGKVYVTE (363 aa)). The Gelsolin-like 1 repeat unit spans residues 27-77 (LELVPVPESAYGNFYVGDAYLVLHTTQASRGFTYRLHFWLGKECTQDESTA). A Phosphotyrosine modification is found at Tyr-102. A 1,2-diacyl-sn-glycero-3-phospho-(1D-myo-inositol-4,5-bisphosphate) is bound by residues 112-119 (KGGLKYKA) and 138-146 (RLLHVKGRR). Gelsolin-like repeat units follow at residues 148-188 (VRAT…YERL), 265-307 (LVAE…QERK), 398-451 (VQIW…DELT), and 523-564 (TRIM…EEEK). Residues 364–715 (KVAHVKQIPF…WFLGWDSSRW (352 aa)) form an actin-binding, Ca-sensitive region. Residues 364 to 715 (KVAHVKQIPF…WFLGWDSSRW (352 aa)) are ca(2+)-dependent actin binding. 3 residues coordinate Ca(2+): Asn-538, Asp-539, and Glu-562. The residue at position 599 (Tyr-599) is a Phosphotyrosine. The Gelsolin-like 6 repeat unit spans residues 626-668 (FIIEEVPGEFTQDDLAEDDVMLLDAWEQIFIWIGKDANEVEKS). Ca(2+) contacts are provided by Asp-643, Asp-644, and Glu-666.

This sequence belongs to the villin/gelsolin family. The N-terminus is blocked. In the adrenal gland, expressed in the medulla but, in the cortex, found only in diffuse parts.

It is found in the cytoplasm. It localises to the cytoskeleton. The protein resides in the cell projection. Its subcellular location is the podosome. Its function is as follows. Ca(2+)-dependent actin filament-severing protein that has a regulatory function in exocytosis by affecting the organization of the microfilament network underneath the plasma membrane. In vitro, also has barbed end capping and nucleating activities in the presence of Ca(2+). Severing activity is inhibited by phosphatidylinositol 4,5-bis-phosphate (PIP2). Required for megakaryocyte differentiation, maturation, polyploidization and apoptosis with the release of platelet-like particles. Plays a role in osteoclastogenesis (OCG) and actin cytoskeletal organization in osteoclasts. Regulates chondrocyte proliferation and differentiation. Inhibits cell proliferation and tumorigenesis. Signaling is mediated by MAPK, p38 and JNK pathways. In Bos taurus (Bovine), this protein is Scinderin.